The chain runs to 152 residues: Sulfur-rich protein (152 aa).

Over residues 1–11 (MSTTPIVSGVT) the composition is skewed to polar residues. A disordered region spans residues 1–21 (MSTTPIVSGVTSQNNSSENVS). Low complexity predominate over residues 12–21 (SQNNSSENVS). 2 helical membrane passes run 44-64 (VGLA…LFIL) and 73-93 (IYLA…ILSM).

It localises to the membrane. This is Sulfur-rich protein (srp) from Chlamydia muridarum (strain MoPn / Nigg).